Reading from the N-terminus, the 221-residue chain is Coiled-coil domain-containing protein 70 (221 aa).

Positions asparagine 129–glutamate 168 form a coiled coil.

The chain is Coiled-coil domain-containing protein 70 (CCDC70) from Macaca fascicularis (Crab-eating macaque).